Reading from the N-terminus, the 141-residue chain is Large ribosomal subunit protein uL11 (141 aa).

Belongs to the universal ribosomal protein uL11 family. In terms of assembly, part of the ribosomal stalk of the 50S ribosomal subunit. Interacts with L10 and the large rRNA to form the base of the stalk. L10 forms an elongated spine to which L12 dimers bind in a sequential fashion forming a multimeric L10(L12)X complex. In terms of processing, one or more lysine residues are methylated.

Forms part of the ribosomal stalk which helps the ribosome interact with GTP-bound translation factors. The polypeptide is Large ribosomal subunit protein uL11 (Lactobacillus delbrueckii subsp. bulgaricus (strain ATCC 11842 / DSM 20081 / BCRC 10696 / JCM 1002 / NBRC 13953 / NCIMB 11778 / NCTC 12712 / WDCM 00102 / Lb 14)).